We begin with the raw amino-acid sequence, 286 residues long: ATP synthase gamma chain (286 aa).

This sequence belongs to the ATPase gamma chain family. F-type ATPases have 2 components, CF(1) - the catalytic core - and CF(0) - the membrane proton channel. CF(1) has five subunits: alpha(3), beta(3), gamma(1), delta(1), epsilon(1). CF(0) has three main subunits: a, b and c.

The protein localises to the cell inner membrane. Its function is as follows. Produces ATP from ADP in the presence of a proton gradient across the membrane. The gamma chain is believed to be important in regulating ATPase activity and the flow of protons through the CF(0) complex. This is ATP synthase gamma chain from Pseudomonas fluorescens (strain Pf0-1).